The chain runs to 1013 residues: Receptor-type tyrosine-protein phosphatase N2 (1013 aa).

Residues 1–19 form the signal peptide; the sequence is MALPLLLLLLLLLPPRVLP. Residues 1 to 419 form an involved in localization to secretory granules; interaction with CPE region; the sequence is MALPLLLLLL…PGALPFAKPL (419 aa). Residues 20 to 613 are Extracellular-facing; the sequence is AAPSSVPHGR…QAEQEDSTKF (594 aa). Disordered regions lie at residues 116-137, 273-302, 342-382, and 401-487; these read RHPE…ERRY, MPRP…TGEG, DHRG…VQDD, and LQDH…SLPA. Residues 419-430 show a composition bias toward basic and acidic residues; the sequence is LKMERKKSERPE. Phosphoserine occurs at positions 434 and 435. Asn562 is a glycosylation site (N-linked (GlcNAc...) asparagine). Residues 614 to 634 form a helical membrane-spanning segment; that stretch reads IALTLVSLACILGVLLASGLI. Topologically, residues 635-1013 are cytoplasmic; that stretch reads YCLRHSSQHR…VNAILKALPQ (379 aa). Residues 664 to 673 carry the Tyrosine-based internalization motif motif; it reads YQELCRQRMA. The disordered stretch occupies residues 673–717; sequence ATRPPDRPEGPHTSRISSVSSQFSDGPMPSPSARSSASSWSEEPV. Over residues 686 to 696 the composition is skewed to polar residues; the sequence is SRISSVSSQFS. Phosphoserine occurs at positions 690 and 696. Residues 703 to 717 are compositionally biased toward low complexity; sequence PSARSSASSWSEEPV. A Tyrosine-protein phosphatase domain is found at 743-1003; it reads LEKEWEALCA…EFALTAVAEE (261 aa). Substrate contacts are provided by residues Asp911 and 943–949; that span reads CSDGAGR. The Phosphocysteine intermediate role is filled by Cys943. At Lys968 the chain carries N6-acetyllysine. Position 988 (Gln988) interacts with substrate. The short motif at 1002–1008 is the Leucine-based sorting signal element; sequence EEVNAIL.

The protein belongs to the protein-tyrosine phosphatase family. Receptor class 8 subfamily. In terms of assembly, self-associates. Interacts (via cytoplasmic domain) with PTPRN (via cytoplasmic domain). Interacts (precursor form) with CPE. Interacts with HAP1. Interacts with AP2A1 or AP2A2 and AP1G1; indicative for an association with adaptor protein complex 2 (AP-2) and adaptor protein complex 1 (AP-1). Interacts with AP2M1; indicative for an association with adaptor protein complex 2 (AP-2). Interacts with MYO5A. In terms of processing, subject to proteolytic cleavage at multiple sites. As to expression, detected in pancreatic islets and adrenal medulla.

The protein localises to the cytoplasmic vesicle. It localises to the secretory vesicle membrane. The protein resides in the secretory vesicle. It is found in the synaptic vesicle membrane. The enzyme catalyses O-phospho-L-tyrosyl-[protein] + H2O = L-tyrosyl-[protein] + phosphate. Plays a role in vesicle-mediated secretory processes. Required for normal accumulation of secretory vesicles in hippocampus, pituitary and pancreatic islets. Required for the accumulation of normal levels of insulin-containing vesicles and preventing their degradation. Plays a role in insulin secretion in response to glucose stimuli. Required for normal accumulation of the neurotransmitters norepinephrine, dopamine and serotonin in the brain. In females, but not in males, required for normal accumulation and secretion of pituitary hormones, such as luteinizing hormone (LH) and follicle-stimulating hormone (FSH). Required to maintain normal levels of renin expression and renin release. May regulate catalytic active protein-tyrosine phosphatases such as PTPRA through dimerization. Has phosphatidylinositol phosphatase activity; the PIPase activity is involved in its ability to regulate insulin secretion. Can dephosphorylate phosphatidylinositol 4,5-biphosphate, phosphatidylinositol 5-phosphate and phosphatidylinositol 3-phosphate. Regulates PI(4,5)P2 level in the plasma membrane and localization of cofilin at the plasma membrane and thus is indirectly involved in regulation of actin dynamics related to cell migration and metastasis; upon hydrolysis of PI(4,5)P2 cofilin is released from the plasma membrane and acts in the cytoplasm in severing F-actin filaments. This is Receptor-type tyrosine-protein phosphatase N2 (PTPRN2) from Macaca nemestrina (Pig-tailed macaque).